The primary structure comprises 335 residues: Methionine import ATP-binding protein MetN (335 aa).

One can recognise an ABC transporter domain in the interval I2–V241. An ATP-binding site is contributed by G38–S45.

It belongs to the ABC transporter superfamily. Methionine importer (TC 3.A.1.24) family. In terms of assembly, the complex is composed of two ATP-binding proteins (MetN), two transmembrane proteins (MetI) and a solute-binding protein (MetQ).

The protein resides in the cell inner membrane. It catalyses the reaction L-methionine(out) + ATP + H2O = L-methionine(in) + ADP + phosphate + H(+). The enzyme catalyses D-methionine(out) + ATP + H2O = D-methionine(in) + ADP + phosphate + H(+). In terms of biological role, part of the ABC transporter complex MetNIQ involved in methionine import. Responsible for energy coupling to the transport system. The polypeptide is Methionine import ATP-binding protein MetN (Xanthomonas oryzae pv. oryzae (strain KACC10331 / KXO85)).